We begin with the raw amino-acid sequence, 199 residues long: Molybdenum cofactor guanylyltransferase (199 aa).

GTP contacts are provided by residues leucine 12 to glycine 14, lysine 25, asparagine 53, aspartate 71, and aspartate 101. Aspartate 101 is a binding site for Mg(2+).

The protein belongs to the MobA family. In terms of assembly, monomer. It depends on Mg(2+) as a cofactor.

Its subcellular location is the cytoplasm. The enzyme catalyses Mo-molybdopterin + GTP + H(+) = Mo-molybdopterin guanine dinucleotide + diphosphate. In terms of biological role, transfers a GMP moiety from GTP to Mo-molybdopterin (Mo-MPT) cofactor (Moco or molybdenum cofactor) to form Mo-molybdopterin guanine dinucleotide (Mo-MGD) cofactor. In Cupriavidus taiwanensis (strain DSM 17343 / BCRC 17206 / CCUG 44338 / CIP 107171 / LMG 19424 / R1) (Ralstonia taiwanensis (strain LMG 19424)), this protein is Molybdenum cofactor guanylyltransferase.